A 182-amino-acid polypeptide reads, in one-letter code: Ribosome maturation factor RimM (182 aa).

Residues 103-182 enclose the PRC barrel domain; sequence GDDYYWKDLM…VIEADWDPGF (80 aa).

Belongs to the RimM family. In terms of assembly, binds ribosomal protein uS19.

The protein localises to the cytoplasm. Functionally, an accessory protein needed during the final step in the assembly of 30S ribosomal subunit, possibly for assembly of the head region. Essential for efficient processing of 16S rRNA. May be needed both before and after RbfA during the maturation of 16S rRNA. It has affinity for free ribosomal 30S subunits but not for 70S ribosomes. The polypeptide is Ribosome maturation factor RimM (Serratia proteamaculans (strain 568)).